The sequence spans 378 residues: Glutamate 5-kinase (378 aa).

Lysine 15 is a binding site for ATP. 3 residues coordinate substrate: serine 56, aspartate 143, and asparagine 155. Residue 175-176 (SD) coordinates ATP. The PUA domain occupies 281 to 358 (KGTLTIDAGA…PDVAVILGIS (78 aa)).

Belongs to the glutamate 5-kinase family.

It is found in the cytoplasm. It catalyses the reaction L-glutamate + ATP = L-glutamyl 5-phosphate + ADP. It functions in the pathway amino-acid biosynthesis; L-proline biosynthesis; L-glutamate 5-semialdehyde from L-glutamate: step 1/2. Catalyzes the transfer of a phosphate group to glutamate to form L-glutamate 5-phosphate. The chain is Glutamate 5-kinase from Bradyrhizobium sp. (strain BTAi1 / ATCC BAA-1182).